Here is a 249-residue protein sequence, read N- to C-terminus: Pyridoxine 5'-phosphate synthase (249 aa).

3-amino-2-oxopropyl phosphate is bound at residue Asn-7. 9–10 (DH) provides a ligand contact to 1-deoxy-D-xylulose 5-phosphate. 3-amino-2-oxopropyl phosphate is bound at residue Arg-18. Residue His-43 is the Proton acceptor of the active site. 1-deoxy-D-xylulose 5-phosphate contacts are provided by Arg-45 and His-50. The Proton acceptor role is filled by Glu-70. 1-deoxy-D-xylulose 5-phosphate is bound at residue Thr-100. His-190 serves as the catalytic Proton donor. 3-amino-2-oxopropyl phosphate is bound by residues Gly-191 and 212 to 213 (GH).

The protein belongs to the PNP synthase family. In terms of assembly, homooctamer; tetramer of dimers.

The protein localises to the cytoplasm. The catalysed reaction is 3-amino-2-oxopropyl phosphate + 1-deoxy-D-xylulose 5-phosphate = pyridoxine 5'-phosphate + phosphate + 2 H2O + H(+). Its pathway is cofactor biosynthesis; pyridoxine 5'-phosphate biosynthesis; pyridoxine 5'-phosphate from D-erythrose 4-phosphate: step 5/5. Its function is as follows. Catalyzes the complicated ring closure reaction between the two acyclic compounds 1-deoxy-D-xylulose-5-phosphate (DXP) and 3-amino-2-oxopropyl phosphate (1-amino-acetone-3-phosphate or AAP) to form pyridoxine 5'-phosphate (PNP) and inorganic phosphate. In Synechococcus sp. (strain CC9902), this protein is Pyridoxine 5'-phosphate synthase.